Here is a 175-residue protein sequence, read N- to C-terminus: Methylated-DNA--protein-cysteine methyltransferase (175 aa).

Cys-142 functions as the Nucleophile; methyl group acceptor in the catalytic mechanism.

Belongs to the MGMT family.

Its subcellular location is the cytoplasm. It catalyses the reaction a 6-O-methyl-2'-deoxyguanosine in DNA + L-cysteinyl-[protein] = S-methyl-L-cysteinyl-[protein] + a 2'-deoxyguanosine in DNA. The catalysed reaction is a 4-O-methyl-thymidine in DNA + L-cysteinyl-[protein] = a thymidine in DNA + S-methyl-L-cysteinyl-[protein]. Its function is as follows. Involved in the cellular defense against the biological effects of O6-methylguanine (O6-MeG) and O4-methylthymine (O4-MeT) in DNA. Repairs the methylated nucleobase in DNA by stoichiometrically transferring the methyl group to a cysteine residue in the enzyme. This is a suicide reaction: the enzyme is irreversibly inactivated. This Thermococcus sibiricus (strain DSM 12597 / MM 739) protein is Methylated-DNA--protein-cysteine methyltransferase.